The primary structure comprises 626 residues: MSETVERHEFGAEVGRLLDLVVHALYSDREIFLRELVANAADATDRRRFEALTNEALALPSDARVLIAPDKAARTLTISDAGIGMSKEDLAQNLGTIARSGTRAFSQALGERAAEGGEDQRPSLIGQFGVGFYSAFMVADRVTVTSRRAGSEEAWTWASDGKGSYTLEPASREQPGTDIVLHMKEDADEYLESYRLDHVVRKWADNIAVPIAIRDAEGKEEAANRGTALWRKPKSEITEEQYKEFYRTVSHGFDEPWATLHWRAEGALEFTGLLFVPSMKPFMPMEDDRRSKVRLHVRRMFITDEAELLPNWLRFVHGVVDTDDLPLNVSREMLQSTPTLQKIRRAVTTRVINELSSRSKNTEKAEEYQKFFENFGPVLKEGIYEDFERRAEIAPLLRFRSSTEGGWTSLPEYVARMKPEQEAIYYLVADDVEALKNSAQLEGFRARRVEVLLLSDHVDAFWPEQLGKFEDKPLRSVTQGSADLAKLKPEGETAEAAPALDTLVAALKLALEPDVSDVRTTDRLVDSAVVLATSGMGPDLQMQRLLRRAGRGFGGSAPILEINPRHALIRSLNERAEAGEDLKAEAGTLLDLARVQDGDTPRDPVAFARAVAAALAGTAAKPAGSA.

The interval 1–331 is a; substrate-binding; it reads MSETVERHEF…TDDLPLNVSR (331 aa). The b stretch occupies residues 332–544; it reads EMLQSTPTLQ…GMGPDLQMQR (213 aa). The tract at residues 545 to 626 is c; sequence LLRRAGRGFG…GTAAKPAGSA (82 aa).

Belongs to the heat shock protein 90 family. In terms of assembly, homodimer.

The protein resides in the cytoplasm. Molecular chaperone. Has ATPase activity. This is Chaperone protein HtpG from Methylorubrum extorquens (strain CM4 / NCIMB 13688) (Methylobacterium extorquens).